A 334-amino-acid chain; its full sequence is Large ribosomal subunit protein uL3 (334 aa).

The span at 1–10 (MGMKKSRPRR) shows a compositional bias: basic residues. The tract at residues 1–20 (MGMKKSRPRRGSLAFSPRKR) is disordered.

This sequence belongs to the universal ribosomal protein uL3 family. As to quaternary structure, part of the 50S ribosomal subunit. Forms a cluster with proteins L14 and L24e.

Functionally, one of the primary rRNA binding proteins, it binds directly near the 3'-end of the 23S rRNA, where it nucleates assembly of the 50S subunit. This is Large ribosomal subunit protein uL3 from Methanococcus maripaludis (strain C7 / ATCC BAA-1331).